The chain runs to 623 residues: Heterogeneous nuclear ribonucleoprotein Q (623 aa).

Ala2 carries the N-acetylalanine modification. Ser159 carries the post-translational modification Phosphoserine. RRM domains follow at residues 162–241 (TEIF…ISVA), 243–325 (NRLF…WADP), and 338–408 (KVLF…FAKP). Lys168 participates in a covalent cross-link: Glycyl lysine isopeptide (Lys-Gly) (interchain with G-Cter in SUMO2). N6-acetyllysine is present on Lys221. Lys363 is modified (N6-acetyllysine). Tyr373 bears the Phosphotyrosine mark. An interaction with APOBEC1 region spans residues 400 to 561 (NIEIVFAKPP…GARGGRGGNV (162 aa)). Residue Arg444 is modified to Asymmetric dimethylarginine; by PRMT1; alternate. At Arg444 the chain carries Omega-N-methylarginine; by PRMT1; alternate. 6 consecutive repeat copies span residues 448–450 (RGG), 451–453 (RGG), 460–464 (YYGYE), 469–472 (YYGY), 478–480 (RGG), and 485–488 (YYGY). The 8 X 3 AA repeats of R-G-G stretch occupies residues 448–559 (RGGRGGYGYP…VRGARGGRGG (112 aa)). A 3 X 4 AA repeats of Y-Y-G-Y region spans residues 460-488 (YYGYEDYYDYYGYDYHNYRGGYEDPYYGY). Arg496 carries the omega-N-methylarginine; by PRMT1 modification. The disordered stretch occupies residues 497 to 623 (GRGGRGARGA…YQDTFGQQWK (127 aa)). One copy of the 1-4 repeat lies at 498 to 500 (RGG). Over residues 504–522 (RGAAPSRGRGAAPPRGRAG) the composition is skewed to low complexity. Arg510 carries the asymmetric dimethylarginine; by PRMT1 modification. At Arg518 the chain carries Asymmetric dimethylarginine; by PRMT1; alternate. Arg518 carries the post-translational modification Omega-N-methylarginine; by PRMT1; alternate. Positions 518 to 549 (RGRAGYSQRGGPGSARGVRGARGGAQQQRGRG) are interaction with SMN. Asymmetric dimethylarginine; alternate is present on Arg526. Arg526 carries the post-translational modification Omega-N-methylarginine; alternate. One copy of the 1-5 repeat lies at 526–528 (RGG). Asymmetric dimethylarginine; by PRMT1; alternate occurs at positions 536 and 539. 2 positions are modified to omega-N-methylarginine; by PRMT1; alternate: Arg536 and Arg539. 3 consecutive repeat copies span residues 539-541 (RGG), 554-556 (RGG), and 557-559 (RGG). A compositionally biased stretch (gly residues) spans 550–562 (VRGARGGRGGNVG). Positions 564 to 578 (KRKADGYNQPDTKRR) match the Bipartite nuclear localization signal motif. Residues 580 to 595 (TNNQNWGSQPIAQQPL) show a composition bias toward polar residues. Phosphoserine is present on Ser587. A Glycyl lysine isopeptide (Lys-Gly) (interchain with G-Cter in SUMO2) cross-link involves residue Lys607. A compositionally biased stretch (polar residues) spans 611-623 (QEFYQDTFGQQWK).

Identified in the spliceosome C complex. Component of the coding region determinant (CRD)-mediated complex, composed of DHX9, HNRNPU, IGF2BP1, SYNCRIP and YBX1. Identified in a mRNP complex, at least composed of DHX9, DDX3X, ELAVL1, HNRNPU, IGF2BP1, ILF3, PABPC1, PCBP2, PTBP2, STAU1, STAU2, SYNCRIP and YBX1. Identified in a mRNP granule complex, at least composed of ACTB, ACTN4, DHX9, ERG, HNRNPA1, HNRNPA2B1, HNRNPAB, HNRNPD, HNRNPL, HNRNPR, HNRNPU, HSPA1, HSPA8, IGF2BP1, ILF2, ILF3, NCBP1, NCL, PABPC1, PABPC4, PABPN1, RPLP0, RPS3, RPS3A, RPS4X, RPS8, RPS9, SYNCRIP, YBX1 and untranslated mRNAs. Interacts with GTPBP1. Isoform 1 is a component of the APOB mRNA editosome complex. Isoform 1 interacts with APOBEC1 and A1CF. Part of a complex associated with the FOS mCRD domain and consisting of PABPC1, PAIP1, CSDE1/UNR, HNRPD and SYNCRIP. Isoform 2 interacts with HNRPR. Interacts with POLR2A hyperphosphorylated C-terminal domain. Interacts with HABP4. Identified in a histone pre-mRNA complex, at least composed of ERI1, LSM11, SLBP, SNRPB, SYNCRIP and YBX1. Isoform 1 and isoform 2 interact with SMN. Isoform 2 interacts through its C-terminal domain with SYT7, SYT8 and SYT9. The non-phosphorylated and phosphorylated forms are colocalized with PAIP1 in polysomes. Phosphorylated on tyrosine. The membrane-bound form found in microsomes is phosphorylated in vitro by insulin receptor tyrosine kinase (INSR). Phosphorylation is inhibited upon binding to RNA, whereas the cytoplasmic form is poorly phosphorylated. As to expression, ubiquitous. Detected in heart, brain, spleen, lung, liver, skeletal muscle, adipocytes, kidney and testis.

The protein resides in the nucleus. The protein localises to the nucleoplasm. Its subcellular location is the microsome. It localises to the cytoplasm. Functionally, heterogeneous nuclear ribonucleoprotein (hnRNP) implicated in mRNA processing mechanisms. Component of the CRD-mediated complex that promotes MYC mRNA stability. Isoform 1 and isoform 2 are associated in vitro with pre-mRNA, splicing intermediates and mature mRNA protein complexes. Isoform 1 binds to apoB mRNA AU-rich sequences. Isoform 1 is part of the APOB mRNA editosome complex and may modulate the postranscriptional C to U RNA-editing of the APOB mRNA through either by binding to A1CF (APOBEC1 complementation factor), to APOBEC1 or to RNA itself. May be involved in translationally coupled mRNA turnover. Implicated with other RNA-binding proteins in the cytoplasmic deadenylation/translational and decay interplay of the FOS mRNA mediated by the major coding-region determinant of instability (mCRD) domain. Interacts in vitro preferentially with poly(A) and poly(U) RNA sequences. Isoform 2 may be involved in cytoplasmic vesicle-based mRNA transport through interaction with synaptotagmins. This Mus musculus (Mouse) protein is Heterogeneous nuclear ribonucleoprotein Q (Syncrip).